Consider the following 340-residue polypeptide: Aliphatic sulfonates import ATP-binding protein SsuB 1 (340 aa).

Residues 44 to 72 are disordered; it reads THHHARVAAQGHARGDAQPPAGALARDDG. Positions 80–299 constitute an ABC transporter domain; that stretch reads VQLRGVGKRY…ARASAGFAAL (220 aa). 112–119 provides a ligand contact to ATP; it reads GRSGCGKS.

This sequence belongs to the ABC transporter superfamily. Aliphatic sulfonates importer (TC 3.A.1.17.2) family. The complex is composed of two ATP-binding proteins (SsuB), two transmembrane proteins (SsuC) and a solute-binding protein (SsuA).

It localises to the cell inner membrane. It catalyses the reaction ATP + H2O + aliphatic sulfonate-[sulfonate-binding protein]Side 1 = ADP + phosphate + aliphatic sulfonateSide 2 + [sulfonate-binding protein]Side 1.. Its function is as follows. Part of the ABC transporter complex SsuABC involved in aliphatic sulfonates import. Responsible for energy coupling to the transport system. This Paraburkholderia xenovorans (strain LB400) protein is Aliphatic sulfonates import ATP-binding protein SsuB 1.